A 1017-amino-acid chain; its full sequence is Multiple C2 domain and transmembrane region protein 14 (1017 aa).

A C2 1 domain is found at 1–110 (MADNVLRKLI…ASAGSETLVY (110 aa)). Residues 139 to 231 (AAPAATEPKP…PAEVKNPPIP (93 aa)) are disordered. Positions 141–153 (PAATEPKPEAAAA) are enriched in low complexity. Over residues 154–213 (TEEKPPEIAKAEDGKKETEAAKTEEKKEGDKKEEEKPKEEAKPDEKKPDAPPDTKAKKPD) the composition is skewed to basic and acidic residues. Residues 217-231 (APPPPPAEVKNPPIP) show a composition bias toward pro residues. 3 consecutive C2 domains span residues 258-387 (DLEL…PQWY), 420-554 (DSGG…SRWF), and 587-714 (VTSD…LNSY). Positions 296, 299, 352, 355, and 359 each coordinate Ca(2+). The next 2 membrane-spanning stretches (helical) occupy residues 851 to 871 (VAIV…AFLI) and 957 to 977 (ATCI…IVPF).

The protein belongs to the MCTP family. Ca(2+) serves as cofactor. As to expression, expressed in incipient leaf primordia and in roots meristems. Observed in flowers.

The protein resides in the membrane. Its subcellular location is the vesicle. The protein localises to the golgi apparatus membrane. In terms of biological role, may function as a signaling molecule by regulating the trafficking of other regulators. This is Multiple C2 domain and transmembrane region protein 14 from Arabidopsis thaliana (Mouse-ear cress).